An 85-amino-acid polypeptide reads, in one-letter code: Cytochrome c6 (85 aa).

Heme c-binding residues include cysteine 14, cysteine 17, histidine 18, and methionine 58.

Belongs to the cytochrome c family. PetJ subfamily. As to quaternary structure, monomer. In terms of processing, binds 1 heme c group covalently per subunit.

It is found in the plastid. The protein resides in the chloroplast thylakoid lumen. In terms of biological role, functions as an electron carrier between membrane-bound cytochrome b6-f and photosystem I in oxygenic photosynthesis. This chain is Cytochrome c6 (petJ), found in Pyropia tenera (Nori).